The sequence spans 668 residues: VLIGDPITTCLSPSVYDIICNLGFQLRENCDINSIVTQNGEVCWKTITDCVSYTESDQGLDYWGSVRLLGPVCEAVHSHFLSLTKGQFEIRYAPWFQWTSFPELFPEIFDALESLQSPAISLSLMKLTSCLERALGDVFLLIGKECPFLLRDLLASEELAQVFGQSVMNVLKVFVGSPCGLNLRNVLWHGFASPEEVPPKYCSMMMLLTAGLGQLLKSYLQKTKLTLAHRSFITPTNLEDLIVFPDVTYEVLSVLEEAMTKSAFILKIMLPYWEVALVKFKSHRFADCAILLLTQLETGLRNVFATLNRCPQRLLTAEILAKHLNDGKINQLPLFLGEPAMEFLWDFLNHQEGPRIRDHLSHGEINLHEFSKETTNQLLAFSVVLLLRFVDEGLLSVFKEKASVELLISLAEGYSSRCHPVFQLKKQVLSCEESIRVWALLPFPKELTWEAVRLEDNSETNACHSLITKMTDELYHHMPEDHCVLKDLDHLPTETWPQLLHELCSTPVRTLFCPRIVLEVLVVLRSIGKQCHRVSGQVTIASELRHRQWVERTLRSRQRQNYLRMWSSIRLLSPVLSLILFLITLELVNVHAVCGKNAHEYQQYLKFVKSILQYTENLVAYTSYEKNKWNETINLTHTVLLKIWTFSEKKQMLIHLAKKSTSKVLMKT.

2 helical membrane passes run 378-398 (LLAF…LSVF) and 575-595 (VLSL…AVCG).

It is found in the endoplasmic reticulum membrane. In terms of biological role, may play a role in neuronal migration during embryonic development. The chain is Endoplasmic reticulum membrane-associated RNA degradation protein (ERMARD) from Macaca fascicularis (Crab-eating macaque).